A 299-amino-acid polypeptide reads, in one-letter code: Regucalcin (299 aa).

Position 18 (Glu-18) interacts with a divalent metal cation. Substrate contacts are provided by Arg-101, Asn-103, and Glu-121. Lys-144 carries the post-translational modification N6-succinyllysine. Positions 154 and 204 each coordinate a divalent metal cation. Catalysis depends on Asp-204, which acts as the Proton donor/acceptor. N6-succinyllysine is present on residues Lys-244 and Lys-253. Position 268 is a phosphoserine (Ser-268).

The protein belongs to the SMP-30/CGR1 family. As to quaternary structure, monomer. Requires Zn(2+) as cofactor. Mn(2+) serves as cofactor. The cofactor is Ca(2+). It depends on Mg(2+) as a cofactor. Co(2+) is required as a cofactor. Post-translationally, the N-terminus is blocked. In terms of tissue distribution, detected in liver (at protein level). Hepatocytes and renal proximal tubular epithelium.

The protein localises to the cytoplasm. It carries out the reaction D-glucono-1,5-lactone + H2O = D-gluconate + H(+). It participates in cofactor biosynthesis; L-ascorbate biosynthesis via UDP-alpha-D-glucuronate pathway; L-ascorbate from UDP-alpha-D-glucuronate: step 3/4. Gluconolactonase with low activity towards other sugar lactones, including gulonolactone and galactonolactone. Catalyzes a key step in ascorbic acid (vitamin C) biosynthesis. Can also hydrolyze diisopropyl phosphorofluoridate and phenylacetate (in vitro). Calcium-binding protein. Modulates Ca(2+) signaling, and Ca(2+)-dependent cellular processes and enzyme activities. The sequence is that of Regucalcin (Rgn) from Rattus norvegicus (Rat).